Here is a 649-residue protein sequence, read N- to C-terminus: ATP-dependent DNA helicase Q1 (649 aa).

A Helicase ATP-binding domain is found at 100-275 (INVTMAGKEV…QKILCIEKCF (176 aa)). Residue 113 to 120 (MPTGGGKG) coordinates ATP. The DEVH box signature appears at 219–222 (DEVH). In terms of domain architecture, Helicase C-terminal spans 300–451 (FIEDIVKLIN…EMVSYCQNIS (152 aa)). 4 residues coordinate Zn(2+): C453, C471, C475, and C478. N6-acetyllysine is present on residues K514 and K522. S597 and S602 each carry phosphoserine. Over residues 597-608 (SFRVESSQTCHS) the composition is skewed to polar residues. The tract at residues 597–649 (SFRVESSQTCHSEQGDKKMEEKNSGNFQKKAANMLQQSGSKNTGAKKRKIDDA) is disordered. Basic and acidic residues predominate over residues 609–619 (EQGDKKMEEKN). Residues 630-639 (MLQQSGSKNT) show a composition bias toward polar residues. The residue at position 634 (S634) is a Phosphoserine. Over residues 640 to 649 (GAKKRKIDDA) the composition is skewed to basic residues.

The protein belongs to the helicase family. RecQ subfamily. As to quaternary structure, may form homodimers or higher order oligomers. Interacts with EXO1. Interacts with MLH1. Interacts with PARP1. It depends on Mg(2+) as a cofactor. Mn(2+) serves as cofactor. The cofactor is Zn(2+).

The protein resides in the nucleus. It carries out the reaction Couples ATP hydrolysis with the unwinding of duplex DNA by translocating in the 3'-5' direction.. It catalyses the reaction ATP + H2O = ADP + phosphate + H(+). The catalysed reaction is dATP + H2O = dADP + phosphate + H(+). Its function is as follows. DNA helicase that plays a role in DNA damage repair and genome stability. Exhibits a magnesium- and ATP-dependent DNA-helicase activity that unwinds single- and double-stranded DNA in a 3'-5' direction. Plays a role in restoring regressed replication forks. Required to restart stalled replication forks induced by abortive topoisomerase 1 and 2 lesions. May play a role in the repair of DNA that is damaged by ultraviolet light or other mutagens. The sequence is that of ATP-dependent DNA helicase Q1 (RECQL) from Pongo abelii (Sumatran orangutan).